Reading from the N-terminus, the 415-residue chain is Serine hydroxymethyltransferase 3 (415 aa).

(6S)-5,6,7,8-tetrahydrofolate contacts are provided by residues Leu122 and 126 to 128 (GHL). Lys230 is modified (N6-(pyridoxal phosphate)lysine).

It belongs to the SHMT family. Homodimer. The cofactor is pyridoxal 5'-phosphate.

The protein localises to the cytoplasm. It catalyses the reaction (6R)-5,10-methylene-5,6,7,8-tetrahydrofolate + glycine + H2O = (6S)-5,6,7,8-tetrahydrofolate + L-serine. It participates in one-carbon metabolism; tetrahydrofolate interconversion. The protein operates within amino-acid biosynthesis; glycine biosynthesis; glycine from L-serine: step 1/1. Catalyzes the reversible interconversion of serine and glycine with tetrahydrofolate (THF) serving as the one-carbon carrier. This reaction serves as the major source of one-carbon groups required for the biosynthesis of purines, thymidylate, methionine, and other important biomolecules. Also exhibits THF-independent aldolase activity toward beta-hydroxyamino acids, producing glycine and aldehydes, via a retro-aldol mechanism. The polypeptide is Serine hydroxymethyltransferase 3 (Burkholderia lata (strain ATCC 17760 / DSM 23089 / LMG 22485 / NCIMB 9086 / R18194 / 383)).